The chain runs to 188 residues: Elongation factor P (188 aa).

The protein belongs to the elongation factor P family.

It is found in the cytoplasm. It participates in protein biosynthesis; polypeptide chain elongation. Its function is as follows. Involved in peptide bond synthesis. Stimulates efficient translation and peptide-bond synthesis on native or reconstituted 70S ribosomes in vitro. Probably functions indirectly by altering the affinity of the ribosome for aminoacyl-tRNA, thus increasing their reactivity as acceptors for peptidyl transferase. In Methylobacterium radiotolerans (strain ATCC 27329 / DSM 1819 / JCM 2831 / NBRC 15690 / NCIMB 10815 / 0-1), this protein is Elongation factor P.